The following is a 241-amino-acid chain: Carboxy-S-adenosyl-L-methionine synthase (241 aa).

Residues tyrosine 38, 63–65 (GCS), 88–89 (DN), 116–117 (DI), asparagine 131, and arginine 198 contribute to the S-adenosyl-L-methionine site.

This sequence belongs to the class I-like SAM-binding methyltransferase superfamily. Cx-SAM synthase family. Homodimer.

The catalysed reaction is prephenate + S-adenosyl-L-methionine = carboxy-S-adenosyl-L-methionine + 3-phenylpyruvate + H2O. In terms of biological role, catalyzes the conversion of S-adenosyl-L-methionine (SAM) to carboxy-S-adenosyl-L-methionine (Cx-SAM). The sequence is that of Carboxy-S-adenosyl-L-methionine synthase from Actinobacillus succinogenes (strain ATCC 55618 / DSM 22257 / CCUG 43843 / 130Z).